Here is a 200-residue protein sequence, read N- to C-terminus: uncharacterized protein (200 aa).

This is an uncharacterized protein from Amazona oratrix (yellow-headed parrot).